A 577-amino-acid polypeptide reads, in one-letter code: Probable HECT-type ubiquitin ligase-interacting protein creD (577 aa).

Disordered stretches follow at residues 376–398 and 428–566; these read LDPAGYRTPGPGSGPGTPFGTLS and NLHA…EEER. 2 stretches are compositionally biased toward polar residues: residues 428–447 and 460–472; these read NLHASRHSNPSPSESENQLE and SSGSNTHSLTSPE. A compositionally biased stretch (basic and acidic residues) spans 473–486; that stretch reads LSRRPSDEVDHDHV. The span at 528–544 shows a compositional bias: polar residues; the sequence is SPQQAHVRSANRSSSYF.

It belongs to the arrestin family. Interacts with hulA.

Component of the regulatory network controlling carbon source utilization through ubiquitination and deubiquitination involving creA, creB, creC, creD and acrB. May be involved in signaling by recognizing appropriately phosphorylated substrates via its arrestin domains and then recruit a HECT-type ubiquitin ligase such as hulA, leading to ubiquitination of the substrate, providing a link between ubiquitination and phosphorylation in protein regulation and stability. This chain is Probable HECT-type ubiquitin ligase-interacting protein creD (creD), found in Aspergillus terreus (strain NIH 2624 / FGSC A1156).